The sequence spans 172 residues: L-methionine sulfoximine/L-methionine sulfone acetyltransferase (172 aa).

One can recognise an N-acetyltransferase domain in the interval 3-166; it reads ASIRDAGVAD…DLTFMQLNLD (164 aa). Substrate-binding positions include 75-77 and 85-87; these read RPF and EHS. Acetyl-CoA-binding positions include 88–90, 96–101, and asparagine 127; these read VYV and GKGLGV.

As to quaternary structure, homodimer.

The enzyme catalyses L-methionine sulfoximine + acetyl-CoA = N-acetyl-L-methionine sulfoximine + CoA + H(+). The catalysed reaction is L-methionine sulfone + acetyl-CoA = N-acetyl-L-methionine sulfone + CoA + H(+). Plays a role in the resistance against the toxic effects of L-methionine sulfoximine (MSX), a rare amino acid, which inhibits glutamine synthetase (GlnA). Catalyzes the acetylation of L-methionine sulfoximine (MSX). The polypeptide is L-methionine sulfoximine/L-methionine sulfone acetyltransferase (Pseudomonas aeruginosa (strain ATCC 15692 / DSM 22644 / CIP 104116 / JCM 14847 / LMG 12228 / 1C / PRS 101 / PAO1)).